The chain runs to 316 residues: Protein lifeguard 2 (316 aa).

Residues 1–53 form a disordered region; the sequence is MTQGKLSVANKAPGTEGQQQVHGEKKEAPAVPSAPPSYEEATSGEGMKAGAFP. A run of 3 helical transmembrane segments spans residues 106 to 126, 138 to 158, and 165 to 185; these read VYTILLIQLLVTLAVVALFTF, PGWYWASYAVFFATYLTLACC, and FPWNLILLTVFTLSMAYLTGM. N-linked (GlcNAc...) asparagine glycosylation occurs at asparagine 191. 4 consecutive transmembrane segments (helical) span residues 194-214, 225-245, 250-270, and 290-310; these read SVLLCLGITALVCLSVTVFSF, GVLFVLPMTLFFSGLILAILL, VPWLHAVYAALGAGVFTLFLA, and IFGALNIYLDIIYIFTFFLQL.

Belongs to the BI1 family. LFG subfamily. Interacts with FAS/TNFRSF6 and BAX.

It localises to the cell membrane. Its subcellular location is the membrane raft. It is found in the postsynaptic cell membrane. Functionally, antiapoptotic protein which protects cells uniquely from Fas-induced apoptosis. Regulates Fas-mediated apoptosis in neurons by interfering with caspase-8 activation. Plays a role in cerebellar development by affecting cerebellar size, internal granular layer (IGL) thickness, and Purkinje cell (PC) development. The polypeptide is Protein lifeguard 2 (FAIM2) (Pongo abelii (Sumatran orangutan)).